A 101-amino-acid chain; its full sequence is Integration host factor subunit beta (101 aa).

This sequence belongs to the bacterial histone-like protein family. Heterodimer of an alpha and a beta chain.

Its function is as follows. This protein is one of the two subunits of integration host factor, a specific DNA-binding protein that functions in genetic recombination as well as in transcriptional and translational control. In Nitrobacter hamburgensis (strain DSM 10229 / NCIMB 13809 / X14), this protein is Integration host factor subunit beta.